Reading from the N-terminus, the 456-residue chain is MNVLVIGAGLAGSEAAWQVAQAGLPVTLVEMRPLRRSPAHHSSEFGELVCSNSFGALSSDRAAGLLQEELRRLGSLVISTADHHAVPAGGALAVDRGRYSAALTEALDAHPLVTIERREQQRLPEPGQITVLATGPLTSEPLAEDLRAFTGREDCHFFDAASPIVEGESINLEVAFRASRYDKGDADYINCPMNQEQYLAFREALLTAEQAELKDFEKDSATFFEGCLPIEELARRGEDTMRYGPLKPIGLWDQRWGDVTDRDVRRAKRAYAVVQLRQEDKDGRLWNLVGFQTNLKWGEQKRVLQLIPGLENASFVRFGVMHRNTFLEAPQLLQPTLQFRQRPSLLAAGQITGTEGYAAAVAGGWLAGTNAARIARGDAPIDLPATTMAGALTHFISEAPSGKFQPMPPNFGLLPELPERIRDKRRRYGAYRDRALADLAPFSSAPKVAEATAAAL.

7 to 12 contributes to the FAD binding site; that stretch reads GAGLAG.

It belongs to the MnmG family. TrmFO subfamily. Requires FAD as cofactor.

It localises to the cytoplasm. It catalyses the reaction uridine(54) in tRNA + (6R)-5,10-methylene-5,6,7,8-tetrahydrofolate + NADH + H(+) = 5-methyluridine(54) in tRNA + (6S)-5,6,7,8-tetrahydrofolate + NAD(+). The enzyme catalyses uridine(54) in tRNA + (6R)-5,10-methylene-5,6,7,8-tetrahydrofolate + NADPH + H(+) = 5-methyluridine(54) in tRNA + (6S)-5,6,7,8-tetrahydrofolate + NADP(+). Catalyzes the folate-dependent formation of 5-methyl-uridine at position 54 (M-5-U54) in all tRNAs. The sequence is that of Methylenetetrahydrofolate--tRNA-(uracil-5-)-methyltransferase TrmFO from Synechococcus sp. (strain RCC307).